The following is a 247-amino-acid chain: 5'-nucleotidase SurE (247 aa).

Residues D8, D9, S39, and N91 each coordinate a divalent metal cation.

This sequence belongs to the SurE nucleotidase family. It depends on a divalent metal cation as a cofactor.

The protein localises to the cytoplasm. It carries out the reaction a ribonucleoside 5'-phosphate + H2O = a ribonucleoside + phosphate. In terms of biological role, nucleotidase that shows phosphatase activity on nucleoside 5'-monophosphates. The chain is 5'-nucleotidase SurE from Nitrosomonas europaea (strain ATCC 19718 / CIP 103999 / KCTC 2705 / NBRC 14298).